A 134-amino-acid polypeptide reads, in one-letter code: Profilin (134 aa).

Belongs to the profilin family. As to quaternary structure, occurs in many kinds of cells as a complex with monomeric actin in a 1:1 ratio.

It localises to the cytoplasm. The protein resides in the cytoskeleton. Binds to actin and affects the structure of the cytoskeleton. At high concentrations, profilin prevents the polymerization of actin, whereas it enhances it at low concentrations. By binding to PIP2, it inhibits the formation of IP3 and DG. In Brassica napus (Rape), this protein is Profilin.